Here is a 165-residue protein sequence, read N- to C-terminus: Phosphopantetheine adenylyltransferase (165 aa).

Thr9 is a binding site for substrate. ATP-binding positions include 9–10 and His17; that span reads TF. The substrate site is built by Lys41, Leu78, and Arg92. ATP is bound by residues 93–95, Glu103, and 128–134; these read GLR and RQAIASK.

Belongs to the bacterial CoaD family. Homohexamer. Mg(2+) serves as cofactor.

Its subcellular location is the cytoplasm. The catalysed reaction is (R)-4'-phosphopantetheine + ATP + H(+) = 3'-dephospho-CoA + diphosphate. Its pathway is cofactor biosynthesis; coenzyme A biosynthesis; CoA from (R)-pantothenate: step 4/5. Reversibly transfers an adenylyl group from ATP to 4'-phosphopantetheine, yielding dephospho-CoA (dPCoA) and pyrophosphate. This chain is Phosphopantetheine adenylyltransferase, found in Ruegeria pomeroyi (strain ATCC 700808 / DSM 15171 / DSS-3) (Silicibacter pomeroyi).